The primary structure comprises 290 residues: Beta carbonic anhydrase 6, mitochondrial (290 aa).

A mitochondrion-targeting transit peptide spans 1-20; the sequence is MAFTLGGRARRLVSATSVHQ. Phosphoserine is present on S122. C226 is subject to S-nitrosocysteine.

Belongs to the beta-class carbonic anhydrase family. Strongly expressed in aerial tissues including leaves, stems, flowers and siliques, and, to a lower extent, in roots. Accumulates in guard cells.

The protein localises to the mitochondrion. The enzyme catalyses hydrogencarbonate + H(+) = CO2 + H2O. Functionally, reversible hydration of carbon dioxide. This Arabidopsis thaliana (Mouse-ear cress) protein is Beta carbonic anhydrase 6, mitochondrial (BCA6).